Here is a 110-residue protein sequence, read N- to C-terminus: Large ribosomal subunit protein uL22 (110 aa).

It belongs to the universal ribosomal protein uL22 family. In terms of assembly, part of the 50S ribosomal subunit.

Its function is as follows. This protein binds specifically to 23S rRNA; its binding is stimulated by other ribosomal proteins, e.g. L4, L17, and L20. It is important during the early stages of 50S assembly. It makes multiple contacts with different domains of the 23S rRNA in the assembled 50S subunit and ribosome. The globular domain of the protein is located near the polypeptide exit tunnel on the outside of the subunit, while an extended beta-hairpin is found that lines the wall of the exit tunnel in the center of the 70S ribosome. The chain is Large ribosomal subunit protein uL22 from Pseudoalteromonas atlantica (strain T6c / ATCC BAA-1087).